We begin with the raw amino-acid sequence, 200 residues long: dTTP/UTP pyrophosphatase (200 aa).

Catalysis depends on D81, which acts as the Proton acceptor.

Belongs to the Maf family. YhdE subfamily. Requires a divalent metal cation as cofactor.

Its subcellular location is the cytoplasm. The enzyme catalyses dTTP + H2O = dTMP + diphosphate + H(+). It catalyses the reaction UTP + H2O = UMP + diphosphate + H(+). Nucleoside triphosphate pyrophosphatase that hydrolyzes dTTP and UTP. May have a dual role in cell division arrest and in preventing the incorporation of modified nucleotides into cellular nucleic acids. This chain is dTTP/UTP pyrophosphatase, found in Cupriavidus metallidurans (strain ATCC 43123 / DSM 2839 / NBRC 102507 / CH34) (Ralstonia metallidurans).